The primary structure comprises 1031 residues: Semaphorin-6A (1031 aa).

The N-terminal stretch at 1–18 (MRPAALLLCLTLLHCAGA) is a signal peptide. Residues 19 to 649 (GFPEDSEPIS…KSNDQLVPVT (631 aa)) are Extracellular-facing. One can recognise a Sema domain in the interval 24–512 (SEPISISHGN…FSTCVIKVPL (489 aa)). Residues N33, N49, and N65 are each glycosylated (N-linked (GlcNAc...) asparagine). 4 disulfide bridges follow: C107–C117, C135–C144, C258–C369, and C283–C328. N282 is a glycosylation site (N-linked (GlcNAc...) asparagine). N434 and N461 each carry an N-linked (GlcNAc...) asparagine glycan. 4 disulfide bridges follow: C477-C506, C515-C533, C521-C568, and C525-C542. Residues 650–670 (LLAIAVILAFVMGAVFSGIIV) form a helical membrane-spanning segment. Residues 671 to 1031 (YCVCDHRRKD…TSMKPNDACT (361 aa)) lie on the Cytoplasmic side of the membrane. S698 bears the Phosphoserine mark. Disordered regions lie at residues 754 to 777 (ALPTPESTPTLQQKRKPNRGSREW), 861 to 902 (SSKS…TGLS), and 914 to 1031 (GLEY…DACT). The segment covering 921 to 931 (YPTNSLTRSHQ) has biased composition (polar residues). A compositionally biased stretch (low complexity) spans 932–951 (TTTLKRNNTNSSNSSHLSRN). S953 carries the phosphoserine modification. 2 stretches are compositionally biased toward polar residues: residues 971–998 (QVHSSQPSGQAVTVSRQPSLNAYNSLTR) and 1019–1031 (PLSTSMKPNDACT).

The protein belongs to the semaphorin family. Active as a homodimer or oligomer. The SEMA6A homodimer interacts with a PLXNA2 homodimer, giving rise to a heterotetramer. Interacts with EVL. In terms of tissue distribution, particularly high levels in spinal cord, cerebellum, metencephalon, superior and inferior colliculus, diencephalon, olfactory bulb and eye.

Its subcellular location is the cell membrane. Cell surface receptor for PLXNA2 that plays an important role in cell-cell signaling. Required for normal granule cell migration in the developing cerebellum. Promotes reorganization of the actin cytoskeleton and plays an important role in axon guidance in the developing central nervous system. Can act as repulsive axon guidance cue. Has repulsive action towards migrating granular neurons. May play a role in channeling sympathetic axons into the sympathetic chains and controlling the temporal sequence of sympathetic target innervation. The polypeptide is Semaphorin-6A (Sema6a) (Mus musculus (Mouse)).